The sequence spans 645 residues: Alkyldihydroxyacetonephosphate synthase, peroxisomal (645 aa).

Residues 1–10 show a composition bias toward low complexity; the sequence is MAEAAAGEAG. The transit peptide at 1–45 directs the protein to the peroxisome; it reads MAEAAAGEAGASERDPDAGRARRRLRVLSGHLLGRPQEAPSTNEC. A disordered region spans residues 1–72; the sequence is MAEAAAGEAG…AAPESGTIPK (72 aa). A compositionally biased stretch (basic and acidic residues) spans 11 to 20; the sequence is ASERDPDAGR. Residues 50-69 show a composition bias toward low complexity; sequence AASAAGASPAATPAAPESGT. A phosphoserine mark is found at S52 and S57. Position 61 is a phosphothreonine (T61). K89 is modified (N6-acetyllysine). Residues 189 to 371 enclose the FAD-binding PCMH-type domain; sequence FERIPDIVVW…TEATIKIRPT (183 aa). FAD contacts are provided by residues 221-227, 290-296, and 303-306; these read PIGGGTS, DSLEFST, and TRAS. Residue K334 is modified to N6-acetyllysine. 355–361 is an FAD binding site; that stretch reads EGTLGVI. R502 is a binding site for substrate. Y565 acts as the Proton donor/acceptor in catalysis. 2 important for enzyme activity regions span residues 602–604 and 641–645; these read HHH and NRNLL.

It belongs to the FAD-binding oxidoreductase/transferase type 4 family. In terms of assembly, homodimer. It depends on FAD as a cofactor.

It localises to the peroxisome membrane. Its subcellular location is the peroxisome. It catalyses the reaction a long chain fatty alcohol + a 1-acylglycerone 3-phosphate = a 1-O-alkylglycerone 3-phosphate + a long-chain fatty acid + H(+). The catalysed reaction is hexadecan-1-ol + 1-hexadecanoylglycerone 3-phosphate = 1-O-hexadecylglycerone 3-phosphate + hexadecanoate + H(+). It carries out the reaction 1-hexadecanoylglycerone 3-phosphate + a long-chain fatty acid = a 1-acylglycerone 3-phosphate + hexadecanoate. It functions in the pathway glycerolipid metabolism; ether lipid biosynthesis. Its function is as follows. Catalyzes the exchange of the acyl chain in acyl-dihydroxyacetonephosphate (acyl-DHAP) for a long chain fatty alcohol, yielding the first ether linked intermediate, i.e. alkyl-dihydroxyacetonephosphate (alkyl-DHAP), in the pathway of ether lipid biosynthesis. This chain is Alkyldihydroxyacetonephosphate synthase, peroxisomal (Agps), found in Mus musculus (Mouse).